The sequence spans 162 residues: NADH-quinone oxidoreductase subunit I (162 aa).

2 consecutive 4Fe-4S ferredoxin-type domains span residues 53–83 (LRRY…IEAE) and 93–122 (TRYD…ETRI). Residues Cys-63, Cys-66, Cys-69, Cys-73, Cys-102, Cys-105, Cys-108, and Cys-112 each coordinate [4Fe-4S] cluster.

Belongs to the complex I 23 kDa subunit family. In terms of assembly, NDH-1 is composed of 14 different subunits. Subunits NuoA, H, J, K, L, M, N constitute the membrane sector of the complex. It depends on [4Fe-4S] cluster as a cofactor.

It is found in the cell inner membrane. It carries out the reaction a quinone + NADH + 5 H(+)(in) = a quinol + NAD(+) + 4 H(+)(out). Its function is as follows. NDH-1 shuttles electrons from NADH, via FMN and iron-sulfur (Fe-S) centers, to quinones in the respiratory chain. The immediate electron acceptor for the enzyme in this species is believed to be ubiquinone. Couples the redox reaction to proton translocation (for every two electrons transferred, four hydrogen ions are translocated across the cytoplasmic membrane), and thus conserves the redox energy in a proton gradient. The chain is NADH-quinone oxidoreductase subunit I from Dechloromonas aromatica (strain RCB).